The primary structure comprises 313 residues: Pyrimidine-specific ribonucleoside hydrolase RihB (313 aa).

Catalysis depends on Asp-11, which acts as the Proton acceptor. The Ca(2+) site is built by Asp-11, Asp-16, and Val-124. Substrate contacts are provided by Gln-227 and His-239. Ca(2+) is bound at residue Asp-240.

This sequence belongs to the IUNH family. RihB subfamily. Homotetramer. Ca(2+) serves as cofactor.

The enzyme catalyses a pyrimidine ribonucleoside + H2O = a pyrimidine nucleobase + D-ribose. In terms of biological role, hydrolyzes cytidine or uridine to ribose and cytosine or uracil, respectively. Has a clear preference for cytidine over uridine. Strictly specific for ribonucleosides. This chain is Pyrimidine-specific ribonucleoside hydrolase RihB, found in Escherichia coli O1:K1 / APEC.